The chain runs to 88 residues: Large ribosomal subunit protein bL31B (88 aa).

It belongs to the bacterial ribosomal protein bL31 family. Type B subfamily. In terms of assembly, part of the 50S ribosomal subunit.

The polypeptide is Large ribosomal subunit protein bL31B (Pasteurella multocida (strain Pm70)).